Here is a 471-residue protein sequence, read N- to C-terminus: V-type ATP synthase beta chain (471 aa).

Belongs to the ATPase alpha/beta chains family.

In terms of biological role, produces ATP from ADP in the presence of a proton gradient across the membrane. The V-type beta chain is a regulatory subunit. This chain is V-type ATP synthase beta chain, found in Streptococcus pyogenes serotype M12 (strain MGAS2096).